Consider the following 435-residue polypeptide: 5-methylthioadenosine/S-adenosylhomocysteine deaminase (435 aa).

2 residues coordinate Zn(2+): His65 and His67. Positions 94, 150, and 189 each coordinate substrate. His216 contacts Zn(2+). Residues Glu219 and Asp304 each coordinate substrate. Zn(2+) is bound at residue Asp304.

The protein belongs to the metallo-dependent hydrolases superfamily. MTA/SAH deaminase family. Zn(2+) is required as a cofactor.

The enzyme catalyses S-adenosyl-L-homocysteine + H2O + H(+) = S-inosyl-L-homocysteine + NH4(+). It catalyses the reaction S-methyl-5'-thioadenosine + H2O + H(+) = S-methyl-5'-thioinosine + NH4(+). Its function is as follows. Catalyzes the deamination of 5-methylthioadenosine and S-adenosyl-L-homocysteine into 5-methylthioinosine and S-inosyl-L-homocysteine, respectively. Is also able to deaminate adenosine. In Bacillus cereus (strain AH187), this protein is 5-methylthioadenosine/S-adenosylhomocysteine deaminase.